We begin with the raw amino-acid sequence, 501 residues long: Glutamyl-tRNA(Gln) amidotransferase subunit A (501 aa).

Catalysis depends on charge relay system residues K80 and S155. S179 (acyl-ester intermediate) is an active-site residue.

It belongs to the amidase family. GatA subfamily. As to quaternary structure, heterotrimer of A, B and C subunits.

It carries out the reaction L-glutamyl-tRNA(Gln) + L-glutamine + ATP + H2O = L-glutaminyl-tRNA(Gln) + L-glutamate + ADP + phosphate + H(+). Its function is as follows. Allows the formation of correctly charged Gln-tRNA(Gln) through the transamidation of misacylated Glu-tRNA(Gln) in organisms which lack glutaminyl-tRNA synthetase. The reaction takes place in the presence of glutamine and ATP through an activated gamma-phospho-Glu-tRNA(Gln). The protein is Glutamyl-tRNA(Gln) amidotransferase subunit A of Cupriavidus necator (strain ATCC 17699 / DSM 428 / KCTC 22496 / NCIMB 10442 / H16 / Stanier 337) (Ralstonia eutropha).